The sequence spans 206 residues: Large ribosomal subunit protein uL4 (206 aa).

It belongs to the universal ribosomal protein uL4 family. In terms of assembly, part of the 50S ribosomal subunit.

Its function is as follows. One of the primary rRNA binding proteins, this protein initially binds near the 5'-end of the 23S rRNA. It is important during the early stages of 50S assembly. It makes multiple contacts with different domains of the 23S rRNA in the assembled 50S subunit and ribosome. In terms of biological role, forms part of the polypeptide exit tunnel. The polypeptide is Large ribosomal subunit protein uL4 (Bradyrhizobium diazoefficiens (strain JCM 10833 / BCRC 13528 / IAM 13628 / NBRC 14792 / USDA 110)).